The sequence spans 478 residues: Proline--tRNA ligase (478 aa).

It belongs to the class-II aminoacyl-tRNA synthetase family. ProS type 3 subfamily. In terms of assembly, homodimer.

It is found in the cytoplasm. It carries out the reaction tRNA(Pro) + L-proline + ATP = L-prolyl-tRNA(Pro) + AMP + diphosphate. Functionally, catalyzes the attachment of proline to tRNA(Pro) in a two-step reaction: proline is first activated by ATP to form Pro-AMP and then transferred to the acceptor end of tRNA(Pro). This is Proline--tRNA ligase from Clostridium botulinum (strain Okra / Type B1).